The following is a 525-amino-acid chain: NGFI-A-binding protein 2 (525 aa).

The disordered stretch occupies residues 1–22 (MHRAPSPTAEQPPGGGDSARRT). Ser6 bears the Phosphoserine mark. The interval 35–113 (ALPRTLGELQ…REWATNPGLF (79 aa)) is NCD1. The tract at residues 135–237 (GTRKGSMSNG…GGTGGGPDRL (103 aa)) is disordered. 4 positions are modified to phosphoserine: Ser157, Ser159, Ser162, and Ser171. Positions 212–234 (AGGGVPEGTGAGGLAAGGTGGGP) are enriched in gly residues. Residues 267–356 (LLKLNKKLAR…SRQVARESTY (90 aa)) form an NCD2 region. The interval 353–384 (ESTYLSSLKGSRLHPEELGGPPLKKLKQEVGE) is necessary for nuclear localization. Lys379 participates in a covalent cross-link: Glycyl lysine isopeptide (Lys-Gly) (interchain with G-Cter in SUMO1). A disordered region spans residues 380 to 416 (QEVGEQSHPEIQQPPPGPESYVPPYRPSLEEDSASLS). Ser479 is subject to Phosphoserine. The segment at 502-525 (PGPHPALVEGRRSSVKVEAEASRQ) is disordered. Positions 510 to 525 (EGRRSSVKVEAEASRQ) are enriched in basic and acidic residues. Lys517 is covalently cross-linked (Glycyl lysine isopeptide (Lys-Gly) (interchain with G-Cter in SUMO1); alternate). A Glycyl lysine isopeptide (Lys-Gly) (interchain with G-Cter in SUMO2); alternate cross-link involves residue Lys517.

It belongs to the NAB family. As to quaternary structure, homomultimers may associate with EGR1 bound to DNA. In terms of processing, sumoylation by EGR2 represses EGR2 transcriptional activity in hindbrain. As to expression, widely expressed at low levels. Highly expressed in melanoma cell lines.

It is found in the nucleus. Functionally, acts as a transcriptional repressor for zinc finger transcription factors EGR1 and EGR2. Isoform 2 lacks repression ability. The sequence is that of NGFI-A-binding protein 2 (NAB2) from Homo sapiens (Human).